A 248-amino-acid polypeptide reads, in one-letter code: Adenosylcobinamide-GDP ribazoletransferase (248 aa).

6 helical membrane passes run 34–54 (LVFAPVVGLLIGGILTILFYI), 58–78 (FFPPGVTGILLIAAYIMLTGG), 113–133 (AVLAVICVVILNYALLSSIPL), 139–159 (ALLLFPVAGRIGSLVGAGSTV), 185–205 (IIYFIVSLLVLNIKGLLLAAA), and 227–247 (DILGAVCELNQTFFLILFYLF).

Belongs to the CobS family. Mg(2+) serves as cofactor.

Its subcellular location is the cell membrane. It catalyses the reaction alpha-ribazole + adenosylcob(III)inamide-GDP = adenosylcob(III)alamin + GMP + H(+). It carries out the reaction alpha-ribazole 5'-phosphate + adenosylcob(III)inamide-GDP = adenosylcob(III)alamin 5'-phosphate + GMP + H(+). Its pathway is cofactor biosynthesis; adenosylcobalamin biosynthesis; adenosylcobalamin from cob(II)yrinate a,c-diamide: step 7/7. In terms of biological role, joins adenosylcobinamide-GDP and alpha-ribazole to generate adenosylcobalamin (Ado-cobalamin). Also synthesizes adenosylcobalamin 5'-phosphate from adenosylcobinamide-GDP and alpha-ribazole 5'-phosphate. This Acetivibrio thermocellus (strain ATCC 27405 / DSM 1237 / JCM 9322 / NBRC 103400 / NCIMB 10682 / NRRL B-4536 / VPI 7372) (Clostridium thermocellum) protein is Adenosylcobinamide-GDP ribazoletransferase.